The primary structure comprises 269 residues: Troponin T, fast skeletal muscle (269 aa).

Positions Met1–Ala23 are enriched in acidic residues. The segment at Met1 to Lys72 is disordered. Ser2 is modified (N-acetylserine). A Phosphoserine modification is found at Ser2. The segment covering Ala24–Glu34 has biased composition (basic and acidic residues). A compositionally biased stretch (acidic residues) spans Glu35 to Glu47. Residues Pro60–Lys72 are compositionally biased toward basic and acidic residues. A Phosphoserine modification is found at Ser88. Positions Arg111–Lys153 are enriched in basic and acidic residues. The interval Arg111–Leu158 is disordered. Residues Ser159, Ser166, and Ser167 each carry the phosphoserine modification. The disordered stretch occupies residues Arg245–Lys269.

Belongs to the troponin T family. In fetal and adult fast skeletal muscles, with a higher level expression in fetal than in adult muscle.

Troponin T is the tropomyosin-binding subunit of troponin, the thin filament regulatory complex which confers calcium-sensitivity to striated muscle actomyosin ATPase activity. The protein is Troponin T, fast skeletal muscle (TNNT3) of Homo sapiens (Human).